We begin with the raw amino-acid sequence, 411 residues long: Glutamyl-tRNA reductase (411 aa).

Residues 49 to 52, Ser-99, 104 to 106, and Gln-110 contribute to the substrate site; these read TCNR and ENE. Cys-50 (nucleophile) is an active-site residue. Position 179 to 184 (179 to 184) interacts with NADP(+); the sequence is GAGEAG.

This sequence belongs to the glutamyl-tRNA reductase family. As to quaternary structure, homodimer.

The enzyme catalyses (S)-4-amino-5-oxopentanoate + tRNA(Glu) + NADP(+) = L-glutamyl-tRNA(Glu) + NADPH + H(+). Its pathway is porphyrin-containing compound metabolism; protoporphyrin-IX biosynthesis; 5-aminolevulinate from L-glutamyl-tRNA(Glu): step 1/2. Functionally, catalyzes the NADPH-dependent reduction of glutamyl-tRNA(Glu) to glutamate 1-semialdehyde (GSA). The polypeptide is Glutamyl-tRNA reductase (Hyperthermus butylicus (strain DSM 5456 / JCM 9403 / PLM1-5)).